A 235-amino-acid polypeptide reads, in one-letter code: Glycerol-3-phosphate acyltransferase (235 aa).

6 helical membrane passes run 4-24, 56-76, 94-114, 122-142, 152-172, and 191-211; these read LLAI…LVAG, VVTL…VAFF, LLAG…GFKG, AGML…IFLL, VASM…KYIF, and FHDS…LAIL.

This sequence belongs to the PlsY family. In terms of assembly, probably interacts with PlsX.

The protein localises to the cell inner membrane. The catalysed reaction is an acyl phosphate + sn-glycerol 3-phosphate = a 1-acyl-sn-glycero-3-phosphate + phosphate. The protein operates within lipid metabolism; phospholipid metabolism. Its function is as follows. Catalyzes the transfer of an acyl group from acyl-phosphate (acyl-PO(4)) to glycerol-3-phosphate (G3P) to form lysophosphatidic acid (LPA). This enzyme utilizes acyl-phosphate as fatty acyl donor, but not acyl-CoA or acyl-ACP. The chain is Glycerol-3-phosphate acyltransferase from Pelodictyon phaeoclathratiforme (strain DSM 5477 / BU-1).